The chain runs to 163 residues: UPF0303 protein SAV_5210 (163 aa).

It belongs to the UPF0303 family.

This Streptomyces avermitilis (strain ATCC 31267 / DSM 46492 / JCM 5070 / NBRC 14893 / NCIMB 12804 / NRRL 8165 / MA-4680) protein is UPF0303 protein SAV_5210.